The sequence spans 278 residues: 4-deoxy-L-threo-5-hexosulose-uronate ketol-isomerase (278 aa).

Zn(2+) is bound by residues histidine 196, histidine 198, glutamate 203, and histidine 245.

Belongs to the KduI family. The cofactor is Zn(2+).

It catalyses the reaction 5-dehydro-4-deoxy-D-glucuronate = 3-deoxy-D-glycero-2,5-hexodiulosonate. It functions in the pathway glycan metabolism; pectin degradation; 2-dehydro-3-deoxy-D-gluconate from pectin: step 4/5. Its function is as follows. Catalyzes the isomerization of 5-dehydro-4-deoxy-D-glucuronate to 3-deoxy-D-glycero-2,5-hexodiulosonate. The polypeptide is 4-deoxy-L-threo-5-hexosulose-uronate ketol-isomerase (Edwardsiella ictaluri (strain 93-146)).